A 296-amino-acid chain; its full sequence is Phosphatidylserine decarboxylase proenzyme (296 aa).

Residues Asp-92, His-149, and Ser-251 each act as charge relay system; for autoendoproteolytic cleavage activity in the active site. Ser-251 acts as the Schiff-base intermediate with substrate; via pyruvic acid; for decarboxylase activity in catalysis. At Ser-251 the chain carries Pyruvic acid (Ser); by autocatalysis.

This sequence belongs to the phosphatidylserine decarboxylase family. PSD-B subfamily. Prokaryotic type I sub-subfamily. Heterodimer of a large membrane-associated beta subunit and a small pyruvoyl-containing alpha subunit. Pyruvate is required as a cofactor. Post-translationally, is synthesized initially as an inactive proenzyme. Formation of the active enzyme involves a self-maturation process in which the active site pyruvoyl group is generated from an internal serine residue via an autocatalytic post-translational modification. Two non-identical subunits are generated from the proenzyme in this reaction, and the pyruvate is formed at the N-terminus of the alpha chain, which is derived from the carboxyl end of the proenzyme. The autoendoproteolytic cleavage occurs by a canonical serine protease mechanism, in which the side chain hydroxyl group of the serine supplies its oxygen atom to form the C-terminus of the beta chain, while the remainder of the serine residue undergoes an oxidative deamination to produce ammonia and the pyruvoyl prosthetic group on the alpha chain. During this reaction, the Ser that is part of the protease active site of the proenzyme becomes the pyruvoyl prosthetic group, which constitutes an essential element of the active site of the mature decarboxylase.

It localises to the cell membrane. It catalyses the reaction a 1,2-diacyl-sn-glycero-3-phospho-L-serine + H(+) = a 1,2-diacyl-sn-glycero-3-phosphoethanolamine + CO2. It functions in the pathway phospholipid metabolism; phosphatidylethanolamine biosynthesis; phosphatidylethanolamine from CDP-diacylglycerol: step 2/2. Catalyzes the formation of phosphatidylethanolamine (PtdEtn) from phosphatidylserine (PtdSer). This is Phosphatidylserine decarboxylase proenzyme from Hahella chejuensis (strain KCTC 2396).